Here is a 1551-residue protein sequence, read N- to C-terminus: Pentafunctional AROM polypeptide 1 (1551 aa).

Residues 1 to 379 (MSIEKVSILG…YESKAHQIFK (379 aa)) form a 3-dehydroquinate synthase region. NAD(+) is bound by residues 42 to 44 (DTN), 80 to 83 (ENHK), 111 to 113 (GGV), and aspartate 116. Arginine 127 is a 7-phospho-2-dehydro-3-deoxy-D-arabino-heptonate binding site. An NAD(+)-binding site is contributed by 136–137 (TT). Residues aspartate 143 and lysine 149 each contribute to the 7-phospho-2-dehydro-3-deoxy-D-arabino-heptonate site. An NAD(+)-binding site is contributed by lysine 158. Asparagine 159 contacts 7-phospho-2-dehydro-3-deoxy-D-arabino-heptonate. NAD(+)-binding positions include 176 to 179 (FLQT) and asparagine 187. Glutamate 191 serves as a coordination point for Zn(2+). 7-phospho-2-dehydro-3-deoxy-D-arabino-heptonate is bound by residues 191 to 194 (EVVK) and lysine 243. The active-site Proton acceptor; for 3-dehydroquinate synthase activity is glutamate 253. 7-phospho-2-dehydro-3-deoxy-D-arabino-heptonate contacts are provided by residues 257 to 261 (RNLLN) and histidine 264. A Zn(2+)-binding site is contributed by histidine 264. Histidine 268 (proton acceptor; for 3-dehydroquinate synthase activity) is an active-site residue. Residues histidine 280 and lysine 351 each contribute to the 7-phospho-2-dehydro-3-deoxy-D-arabino-heptonate site. Histidine 280 is a Zn(2+) binding site. The segment at 392-835 (VHPFANRHPE…WDVLHSKFNA (444 aa)) is EPSP synthase. The segment at 854–1044 (DRSIVIIGMR…LPATRSTFVT (191 aa)) is shikimate kinase. 861 to 868 (GMRAAGKT) provides a ligand contact to ATP. A 3-dehydroquinase region spans residues 1045-1258 (LTYPDLRKVP…IGVGQLSLKE (214 aa)). The Proton acceptor; for 3-dehydroquinate dehydratase activity role is filled by histidine 1162. Catalysis depends on lysine 1191, which acts as the Schiff-base intermediate with substrate; for 3-dehydroquinate dehydratase activity. A shikimate dehydrogenase region spans residues 1271-1551 (EKEFWVVGSP…KVIHSAVLNE (281 aa)).

It in the N-terminal section; belongs to the sugar phosphate cyclases superfamily. Dehydroquinate synthase family. The protein in the 2nd section; belongs to the EPSP synthase family. This sequence in the 3rd section; belongs to the shikimate kinase family. In the 4th section; belongs to the type-I 3-dehydroquinase family. It in the C-terminal section; belongs to the shikimate dehydrogenase family. In terms of assembly, homodimer. It depends on Zn(2+) as a cofactor.

The protein resides in the cytoplasm. It catalyses the reaction 7-phospho-2-dehydro-3-deoxy-D-arabino-heptonate = 3-dehydroquinate + phosphate. The catalysed reaction is 3-dehydroquinate = 3-dehydroshikimate + H2O. The enzyme catalyses shikimate + NADP(+) = 3-dehydroshikimate + NADPH + H(+). It carries out the reaction shikimate + ATP = 3-phosphoshikimate + ADP + H(+). It catalyses the reaction 3-phosphoshikimate + phosphoenolpyruvate = 5-O-(1-carboxyvinyl)-3-phosphoshikimate + phosphate. It participates in metabolic intermediate biosynthesis; chorismate biosynthesis; chorismate from D-erythrose 4-phosphate and phosphoenolpyruvate: step 2/7. It functions in the pathway metabolic intermediate biosynthesis; chorismate biosynthesis; chorismate from D-erythrose 4-phosphate and phosphoenolpyruvate: step 3/7. The protein operates within metabolic intermediate biosynthesis; chorismate biosynthesis; chorismate from D-erythrose 4-phosphate and phosphoenolpyruvate: step 4/7. Its pathway is metabolic intermediate biosynthesis; chorismate biosynthesis; chorismate from D-erythrose 4-phosphate and phosphoenolpyruvate: step 5/7. It participates in metabolic intermediate biosynthesis; chorismate biosynthesis; chorismate from D-erythrose 4-phosphate and phosphoenolpyruvate: step 6/7. The AROM polypeptide catalyzes 5 consecutive enzymatic reactions in prechorismate polyaromatic amino acid biosynthesis. This is Pentafunctional AROM polypeptide 1 from Lodderomyces elongisporus (strain ATCC 11503 / CBS 2605 / JCM 1781 / NBRC 1676 / NRRL YB-4239) (Yeast).